Here is a 940-residue protein sequence, read N- to C-terminus: Alanine--tRNA ligase (940 aa).

Zn(2+) is bound by residues H581, H585, C683, and H687.

This sequence belongs to the class-II aminoacyl-tRNA synthetase family. It depends on Zn(2+) as a cofactor.

It is found in the cytoplasm. It carries out the reaction tRNA(Ala) + L-alanine + ATP = L-alanyl-tRNA(Ala) + AMP + diphosphate. In terms of biological role, catalyzes the attachment of alanine to tRNA(Ala) in a two-step reaction: alanine is first activated by ATP to form Ala-AMP and then transferred to the acceptor end of tRNA(Ala). Also edits incorrectly charged Ser-tRNA(Ala) and Gly-tRNA(Ala) via its editing domain. The protein is Alanine--tRNA ligase of Leptospira borgpetersenii serovar Hardjo-bovis (strain JB197).